A 503-amino-acid chain; its full sequence is Protein FAM124A (503 aa).

The segment at 434 to 470 (LAQSDTVPGRQNHSSDSLHSVSDISSSPCPVFPSTPA) is disordered. The span at 436–445 (QSDTVPGRQN) shows a compositional bias: polar residues. Residues 447-460 (SSDSLHSVSDISSS) show a composition bias toward low complexity.

The protein belongs to the FAM124 family.

This chain is Protein FAM124A (fam124a), found in Xenopus tropicalis (Western clawed frog).